Here is a 115-residue protein sequence, read N- to C-terminus: Large ribosomal subunit protein bL19 (115 aa).

Belongs to the bacterial ribosomal protein bL19 family.

In terms of biological role, this protein is located at the 30S-50S ribosomal subunit interface and may play a role in the structure and function of the aminoacyl-tRNA binding site. The sequence is that of Large ribosomal subunit protein bL19 from Leifsonia xyli subsp. xyli (strain CTCB07).